The following is a 668-amino-acid chain: Fructose-1,6-bisphosphatase class 3 (668 aa).

The protein belongs to the FBPase class 3 family. Mn(2+) is required as a cofactor.

The enzyme catalyses beta-D-fructose 1,6-bisphosphate + H2O = beta-D-fructose 6-phosphate + phosphate. The protein operates within carbohydrate biosynthesis; gluconeogenesis. The protein is Fructose-1,6-bisphosphatase class 3 of Clostridium botulinum (strain Okra / Type B1).